A 162-amino-acid polypeptide reads, in one-letter code: N5-carboxyaminoimidazole ribonucleotide mutase (162 aa).

Substrate contacts are provided by Ser11, Asp14, and Arg41.

This sequence belongs to the AIR carboxylase family. Class I subfamily.

The catalysed reaction is 5-carboxyamino-1-(5-phospho-D-ribosyl)imidazole + H(+) = 5-amino-1-(5-phospho-D-ribosyl)imidazole-4-carboxylate. The protein operates within purine metabolism; IMP biosynthesis via de novo pathway; 5-amino-1-(5-phospho-D-ribosyl)imidazole-4-carboxylate from 5-amino-1-(5-phospho-D-ribosyl)imidazole (N5-CAIR route): step 2/2. Functionally, catalyzes the conversion of N5-carboxyaminoimidazole ribonucleotide (N5-CAIR) to 4-carboxy-5-aminoimidazole ribonucleotide (CAIR). The chain is N5-carboxyaminoimidazole ribonucleotide mutase from Bacillus subtilis (strain 168).